A 690-amino-acid polypeptide reads, in one-letter code: DNA ligase (690 aa).

Residues 43–47, 92–93, and Glu-129 contribute to the NAD(+) site; these read DAEYD and SI. Residue Lys-131 is the N6-AMP-lysine intermediate of the active site. NAD(+) contacts are provided by Arg-152, Glu-188, Lys-309, and Lys-333. The Zn(2+) site is built by Cys-427, Cys-430, Cys-445, and Cys-451. The 81-residue stretch at 610–690 folds into the BRCT domain; sequence VTPTPLSGKT…GLKELLDGHS (81 aa).

It belongs to the NAD-dependent DNA ligase family. LigA subfamily. Mg(2+) serves as cofactor. It depends on Mn(2+) as a cofactor.

It catalyses the reaction NAD(+) + (deoxyribonucleotide)n-3'-hydroxyl + 5'-phospho-(deoxyribonucleotide)m = (deoxyribonucleotide)n+m + AMP + beta-nicotinamide D-nucleotide.. Functionally, DNA ligase that catalyzes the formation of phosphodiester linkages between 5'-phosphoryl and 3'-hydroxyl groups in double-stranded DNA using NAD as a coenzyme and as the energy source for the reaction. It is essential for DNA replication and repair of damaged DNA. This Albidiferax ferrireducens (strain ATCC BAA-621 / DSM 15236 / T118) (Rhodoferax ferrireducens) protein is DNA ligase.